We begin with the raw amino-acid sequence, 407 residues long: D-inositol 3-phosphate glycosyltransferase (407 aa).

1D-myo-inositol 3-phosphate is bound at residue histidine 2. UDP-N-acetyl-alpha-D-glucosamine-binding positions include 8-9 (QP) and glycine 16. 1D-myo-inositol 3-phosphate-binding positions include 13 to 18 (DAGGLN), arginine 71, tyrosine 104, threonine 128, and arginine 148. 2 residues coordinate UDP-N-acetyl-alpha-D-glucosamine: arginine 222 and lysine 227. Residues tyrosine 297, arginine 298, and alanine 300 each coordinate Mg(2+). UDP-N-acetyl-alpha-D-glucosamine contacts are provided by glutamate 310 and glutamate 318. Threonine 324 contacts Mg(2+).

This sequence belongs to the glycosyltransferase group 1 family. MshA subfamily. In terms of assembly, homodimer.

It catalyses the reaction 1D-myo-inositol 3-phosphate + UDP-N-acetyl-alpha-D-glucosamine = 1D-myo-inositol 2-acetamido-2-deoxy-alpha-D-glucopyranoside 3-phosphate + UDP + H(+). Catalyzes the transfer of a N-acetyl-glucosamine moiety to 1D-myo-inositol 3-phosphate to produce 1D-myo-inositol 2-acetamido-2-deoxy-glucopyranoside 3-phosphate in the mycothiol biosynthesis pathway. This is D-inositol 3-phosphate glycosyltransferase from Frankia alni (strain DSM 45986 / CECT 9034 / ACN14a).